The primary structure comprises 167 residues: Phosphopantetheine adenylyltransferase (167 aa).

Threonine 9 contributes to the substrate binding site. Residues 9–10 (TF) and histidine 17 each bind ATP. Positions 41, 73, and 87 each coordinate substrate. ATP-binding positions include 88–90 (GLR), glutamate 98, and 123–129 (YQFISGT).

It belongs to the bacterial CoaD family. Homohexamer. Mg(2+) is required as a cofactor.

It is found in the cytoplasm. The catalysed reaction is (R)-4'-phosphopantetheine + ATP + H(+) = 3'-dephospho-CoA + diphosphate. It participates in cofactor biosynthesis; coenzyme A biosynthesis; CoA from (R)-pantothenate: step 4/5. Reversibly transfers an adenylyl group from ATP to 4'-phosphopantetheine, yielding dephospho-CoA (dPCoA) and pyrophosphate. The protein is Phosphopantetheine adenylyltransferase of Bordetella avium (strain 197N).